Reading from the N-terminus, the 377-residue chain is Nitric oxide reductase FlRd-NAD(+) reductase (377 aa).

Belongs to the FAD-dependent oxidoreductase family. FAD is required as a cofactor.

It localises to the cytoplasm. The catalysed reaction is 2 reduced [nitric oxide reductase rubredoxin domain] + NAD(+) + H(+) = 2 oxidized [nitric oxide reductase rubredoxin domain] + NADH. Its pathway is nitrogen metabolism; nitric oxide reduction. One of at least two accessory proteins for anaerobic nitric oxide (NO) reductase. Reduces the rubredoxin moiety of NO reductase. The protein is Nitric oxide reductase FlRd-NAD(+) reductase of Shigella sonnei (strain Ss046).